The sequence spans 133 residues: Large ribosomal subunit protein bL19 (133 aa).

This sequence belongs to the bacterial ribosomal protein bL19 family.

Functionally, this protein is located at the 30S-50S ribosomal subunit interface and may play a role in the structure and function of the aminoacyl-tRNA binding site. This is Large ribosomal subunit protein bL19 from Stenotrophomonas maltophilia (strain K279a).